Here is a 337-residue protein sequence, read N- to C-terminus: Phenylpyruvate C(3)-methyltransferase (337 aa).

Belongs to the methyltransferase superfamily.

The catalysed reaction is 3-phenylpyruvate + S-adenosyl-L-methionine = (3S)-2-oxo-3-phenylbutanoate + S-adenosyl-L-homocysteine + H(+). The protein operates within antibiotic biosynthesis. Functionally, S-adenosyl-L-methionine-dependent methyltransferase involved in synthesis of the nonproteinogenic amino acid (2S,3S)-beta-methyl-phenylalanine, a building block of the antibiotic mannopeptimycin. This is Phenylpyruvate C(3)-methyltransferase (mppJ) from Streptomyces hygroscopicus.